Consider the following 148-residue polypeptide: Thioredoxin H8 (148 aa).

The 145-residue stretch at 1 to 145 (MGANVSTPDQ…LERKLNKYTQ (145 aa)) folds into the Thioredoxin domain. Active-site nucleophile residues include C71 and C74. C71 and C74 are disulfide-bonded.

This sequence belongs to the thioredoxin family. Plant H-type subfamily.

The protein localises to the cytoplasm. In terms of biological role, probable thiol-disulfide oxidoreductase that may be involved in the redox regulation of a number of cytosolic enzymes. This chain is Thioredoxin H8 (TRX8), found in Arabidopsis thaliana (Mouse-ear cress).